The sequence spans 337 residues: MKVAVDAMGGDFAPQSVIEGVLQARSEFTDLDFILYGDQAQIEPLIDDMTRLTIVHTTEKIASDDEPVRAIRRKKQASMVLAAQAVKDGQADALFSLGNTGALLAAGLFIIGRVKGIDRPGLMPTLPSINSDQGFNMLDVGANAEAKPEHLHQYGLMGNFYAKDVRGIENPRIALLNNGTEATKGDELHKATYQLLADDPDLNFVGNVEANDLLKGVADVVVTDGFTGNATLKAIEGTATIVMSQVKHAIMDAGVKEKIGGLLLRGSVGGIREKFDTSIYGGAVLLGLKAPVIKAHGAADARTVYYTVKQIHAMLANQTVQKVIDYFSDQAAQKNSN.

The protein belongs to the PlsX family. As to quaternary structure, homodimer. Probably interacts with PlsY.

Its subcellular location is the cytoplasm. The catalysed reaction is a fatty acyl-[ACP] + phosphate = an acyl phosphate + holo-[ACP]. It participates in lipid metabolism; phospholipid metabolism. In terms of biological role, catalyzes the reversible formation of acyl-phosphate (acyl-PO(4)) from acyl-[acyl-carrier-protein] (acyl-ACP). This enzyme utilizes acyl-ACP as fatty acyl donor, but not acyl-CoA. This chain is Phosphate acyltransferase, found in Latilactobacillus sakei subsp. sakei (strain 23K) (Lactobacillus sakei subsp. sakei).